Here is an 849-residue protein sequence, read N- to C-terminus: Rho guanine nucleotide exchange factor 15 (849 aa).

Disordered stretches follow at residues 1–146 (MSAQ…ASAP), 159–202 (GAEG…NGTP), and 277–308 (LPPL…LPSE). Positions 18 to 31 (RIIRPRPPSRHRAP) are enriched in basic residues. Over residues 48–59 (QISNDASASVCT) the composition is skewed to polar residues. The segment covering 65–110 (PPTASLKPPALLPPSVSRTSLDSQTSPDSPSSTPSPSPVSRRSISP) has biased composition (low complexity). Residues Ser107 and Ser109 each carry the phosphoserine modification. Residues 111–123 (EPAPCSPVPPPKP) are compositionally biased toward pro residues. Residues 164 to 180 (AQSSDSLERCSQGSTEV) are compositionally biased toward polar residues. Tyr361 carries the post-translational modification Phosphotyrosine; by EPHB2. The DH domain occupies 425-609 (RMQESLFEVV…SKIIERCSAE (185 aa)). 2 stretches are compositionally biased toward polar residues: residues 771-786 (CSEP…QSLE) and 840-849 (SSGTPDTPQP). 2 disordered regions span residues 771–803 (CSEP…GWLK) and 819–849 (GEHE…TPQP).

In terms of assembly, interacts with EPHA4. Interacts with EPHB2. Phosphorylated on tyrosine residues upon EFNA1 stimulation. EPHB2-dependent phosphorylation at Tyr-361 triggers UBE3A-mediated ubiquitination. Post-translationally, ubiquitinated; UBE3A-mediated ubiquitination and degradation by the proteasome promotes EFNB1-dependent synapse formation. As to expression, at P12, expressed is detected in the CA1 region and the dentate gyrus of the hippocampus.

Its subcellular location is the cell projection. It localises to the dendrite. In terms of biological role, specific GEF for RhoA activation. Does not activate RAC1 or CDC42. Regulates vascular smooth muscle contractility. Negatively regulates excitatory synapse development by suppressing the synapse-promoting activity of EPHB2. This is Rho guanine nucleotide exchange factor 15 (Arhgef15) from Mus musculus (Mouse).